Here is a 295-residue protein sequence, read N- to C-terminus: MKKMQEPIEDPLSKLTQYSGKTFVIKYGGSIMKNKKAEEAFIKDVKYLRKLGINIVIVHGGGPEISRWLELSGIESRFVDGLRVTDEKVIEIVQMVLSGKINKKLSLQFNIDGVNAVGLSGVDNKLIEATKKYVYKGNETIDIGYVGKVTKVNSEFIKELLKGGQVPVIAPIGCDNKGNVYNINADYAAAFISSALDAEKLIILTDVEGVYRNINDPQSIIHEIDIKDVNYYIKEEIIKGGMIPKVQCCASAIENGTKNVQLIDGRNDHCLINDILNYRGTIISYRSGVKCQKAI.

Residues 61-62 (GG), Arg83, and Asn182 each bind substrate.

Belongs to the acetylglutamate kinase family. ArgB subfamily.

The protein localises to the cytoplasm. It catalyses the reaction N-acetyl-L-glutamate + ATP = N-acetyl-L-glutamyl 5-phosphate + ADP. It functions in the pathway amino-acid biosynthesis; L-arginine biosynthesis; N(2)-acetyl-L-ornithine from L-glutamate: step 2/4. Functionally, catalyzes the ATP-dependent phosphorylation of N-acetyl-L-glutamate. The sequence is that of Acetylglutamate kinase from Clostridium acetobutylicum (strain ATCC 824 / DSM 792 / JCM 1419 / IAM 19013 / LMG 5710 / NBRC 13948 / NRRL B-527 / VKM B-1787 / 2291 / W).